We begin with the raw amino-acid sequence, 512 residues long: Probable multidrug resistance protein EmrY (512 aa).

At 1–8 (MAITKSTP) the chain is on the cytoplasmic side. A helical transmembrane segment spans residues 9–29 (APLTGGTLWCVTIALSLATFM). A topological domain (periplasmic) is located at residue Q30. Residues 31–51 (MLDSTISNVAIPTISGFLGAS) form a helical membrane-spanning segment. At 52 to 53 (TD) the chain is on the cytoplasmic side. Residues 54-74 (EGTWVITSFGVANAIAIPVTG) form a helical membrane-spanning segment. The Periplasmic portion of the chain corresponds to 75–84 (RLAQRIGELR). 2 helical membrane passes run 85–105 (LFLL…LSTN) and 106–126 (LDVL…LIPL). Residues 127–141 (SQSLLLRNYPPEKRT) lie on the Periplasmic side of the membrane. The helical transmembrane segment at 142–162 (FALALWSMTVIIAPICGPILG) threads the bilayer. Over 163-172 (GYICDNFSWG) the chain is Cytoplasmic. The chain crosses the membrane as a helical span at residues 173–193 (WIFLINVPMGIIVLTLCLTLL). The Periplasmic segment spans residues 194–204 (KGRETETSPVK). A helical membrane pass occupies residues 205-225 (MNLPGLTLLVLGVGGLQIMLD). The Cytoplasmic segment spans residues 226 to 234 (KGRDLDWFN). Residues 235–255 (SSTIIILTVVSVISLISLVIW) traverse the membrane as a helical segment. Over 256–273 (ESTSENPILDLSLFKSRN) the chain is Periplasmic. The chain crosses the membrane as a helical span at residues 274–294 (FTIGIVSITCAYLFYSGAIVL). Residues 295–307 (MPQLLQETMGYNA) are Cytoplasmic-facing. Residues 308-328 (IWAGLAYAPIGIMPLLISPLI) form a helical membrane-spanning segment. The Periplasmic portion of the chain corresponds to 329-338 (GRYGNKIDMR). Residues 339 to 359 (LLVTFSFLMYAVCYYWRSVTF) traverse the membrane as a helical segment. Residues 360-364 (MPTID) lie on the Cytoplasmic side of the membrane. Residues 365–385 (FTGIILPQFFQGFAVACFFLP) traverse the membrane as a helical segment. Residues 386–486 (LTTISFSGLP…LSISANEIFR (101 aa)) lie on the Periplasmic side of the membrane. A helical membrane pass occupies residues 487–507 (MAAIAFILLTVLVWFAKPPFT). Residues 508 to 512 (AKGVG) lie on the Cytoplasmic side of the membrane.

Belongs to the major facilitator superfamily. EmrB family. Part of the tripartite efflux system EmrYK-TolC, which is composed of an inner membrane transporter, EmrY, a membrane fusion protein, EmrK, and an outer membrane component, TolC. The complex forms a large protein conduit and can translocate molecules across both the inner and outer membranes.

Its subcellular location is the cell inner membrane. In terms of biological role, part of the tripartite efflux system EmrYK-TolC, which confers resistance to various drugs. In Escherichia coli (strain K12), this protein is Probable multidrug resistance protein EmrY (emrY).